Consider the following 473-residue polypeptide: ATP synthase subunit beta (473 aa).

158–165 contributes to the ATP binding site; sequence GGAGVGKT.

It belongs to the ATPase alpha/beta chains family. As to quaternary structure, F-type ATPases have 2 components, CF(1) - the catalytic core - and CF(0) - the membrane proton channel. CF(1) has five subunits: alpha(3), beta(3), gamma(1), delta(1), epsilon(1). CF(0) has three main subunits: a(1), b(2) and c(9-12). The alpha and beta chains form an alternating ring which encloses part of the gamma chain. CF(1) is attached to CF(0) by a central stalk formed by the gamma and epsilon chains, while a peripheral stalk is formed by the delta and b chains.

The protein localises to the cell membrane. It catalyses the reaction ATP + H2O + 4 H(+)(in) = ADP + phosphate + 5 H(+)(out). Produces ATP from ADP in the presence of a proton gradient across the membrane. The catalytic sites are hosted primarily by the beta subunits. The chain is ATP synthase subunit beta from Geobacillus thermoleovorans (Bacillus thermoleovorans).